Reading from the N-terminus, the 160-residue chain is Endoribonuclease YbeY (160 aa).

3 residues coordinate Zn(2+): His-125, His-129, and His-135.

The protein belongs to the endoribonuclease YbeY family. It depends on Zn(2+) as a cofactor.

The protein resides in the cytoplasm. Single strand-specific metallo-endoribonuclease involved in late-stage 70S ribosome quality control and in maturation of the 3' terminus of the 16S rRNA. The polypeptide is Endoribonuclease YbeY (Dehalococcoides mccartyi (strain ATCC BAA-2100 / JCM 16839 / KCTC 5957 / BAV1)).